Reading from the N-terminus, the 459-residue chain is Uterine milk protein (459 aa).

The signal sequence occupies residues 1 to 25 (MSHGRMNLALSLVFILCGLFNSIFC). Residue asparagine 268 is glycosylated (N-linked (GlcNAc...) asparagine).

It belongs to the serpin family. UTMP subfamily.

The sequence is that of Uterine milk protein from Bos taurus (Bovine).